The sequence spans 232 residues: Probable fimbrial chaperone LpfB (232 aa).

Positions Met1 to Ala24 are cleaved as a signal peptide.

Belongs to the periplasmic pilus chaperone family.

It localises to the periplasm. Part of the lpfABCC'DE fimbrial operon. LP fimbriae may participate in the interaction with eukaryotic cells by assisting in microcolony formation. This is Probable fimbrial chaperone LpfB (lpfB) from Escherichia coli O157:H7.